A 491-amino-acid chain; its full sequence is 2,3-bisphosphoglycerate-independent phosphoglycerate mutase (491 aa).

Mn(2+) is bound by residues Asp11 and Ser61. Ser61 acts as the Phosphoserine intermediate in catalysis. Substrate contacts are provided by residues His118, 147–148, Arg177, Arg183, 247–250, and Lys320; these read RD and RNDR. The Mn(2+) site is built by Asp386, His390, Asp427, His428, and His445.

It belongs to the BPG-independent phosphoglycerate mutase family. As to quaternary structure, monomer. The cofactor is Mn(2+).

It carries out the reaction (2R)-2-phosphoglycerate = (2R)-3-phosphoglycerate. It functions in the pathway carbohydrate degradation; glycolysis; pyruvate from D-glyceraldehyde 3-phosphate: step 3/5. Catalyzes the interconversion of 2-phosphoglycerate and 3-phosphoglycerate. The polypeptide is 2,3-bisphosphoglycerate-independent phosphoglycerate mutase (Helicobacter pylori (strain J99 / ATCC 700824) (Campylobacter pylori J99)).